Here is a 186-residue protein sequence, read N- to C-terminus: MRALIIVDVQNDFCEGGSLAVTGGAALARAISDYLAEAADYHHVVATKDFHIDPGDHFSGTPDYSSSWPPHCVSGTPGADFHPSLDTSAIEAVFYKGAYTGAYSGFEGVDENGTPLLNWLRQRGVDEVDVVGIATDHCVRQTAEDAVRNGLATRVLVDLTAGVSADTTVAALEEMRTASVELVCSS.

Catalysis depends on Asp-8, which acts as the Proton acceptor. The Fe cation site is built by Asp-49, His-51, His-57, and His-71. The active site involves Lys-96. Cys-138 serves as the catalytic Nucleophile.

It belongs to the isochorismatase family. As to quaternary structure, monomer. Mn(2+) serves as cofactor. Fe(2+) is required as a cofactor.

The catalysed reaction is nicotinamide + H2O = nicotinate + NH4(+). The enzyme catalyses pyrazinamide + H2O = pyrazine-2-carboxylate + NH4(+). It functions in the pathway cofactor biosynthesis; nicotinate biosynthesis; nicotinate from nicotinamide: step 1/1. With respect to regulation, is inhibited by Cu(2+), Zn(2+) and Fe(3+). Its function is as follows. Catalyzes the deamidation of nicotinamide (NAM) into nicotinate. Likely functions in the cyclical salvage pathway for production of NAD from nicotinamide. In terms of biological role, is involved in the activation of the first-line antituberculous drug pyrazinamide (PZA) by converting it into the active form, pyrazinoic acid. The sequence is that of Nicotinamidase/pyrazinamidase from Mycobacterium tuberculosis (strain ATCC 25618 / H37Rv).